We begin with the raw amino-acid sequence, 242 residues long: Protein HTATIP2 (242 aa).

Ala-2 is subject to N-acetylalanine. Positions 2–25 (ADKETLLKLREDFKMQNKSVFILG) are required for interaction with elongation factor EEF1A1. Residues Ser-27, Gly-28, Glu-29, Thr-30, Arg-52, Arg-53, Leu-92, Gly-93, Tyr-143, Lys-147, Leu-170, and Arg-178 each coordinate NADPH. Catalysis depends on Tyr-143, which acts as the Proton acceptor. Lys-147 is an active-site residue.

In terms of assembly, monomer. Forms homodimers during oxidative stress. Interacts (via N-terminus) with elongation factor EEF1A1 (via middle-region); the interaction is direct and competes with EEF1A1 binding to guanyl-nucleotide exchange factor EEF1B2, thereby inhibiting GDP for GTP exchange and reactivation of EEF1A1. Interacts with nuclear transport receptors XPO4, IPO5/RANBP5, IPO7, IPO9 and KPNB1 as well as GCN1L1/GCN1 and LRPPRC probably through their HEAT repeats. Binds NCOA5/CIA.

Its function is as follows. Represses translation by preventing reactivation of elongation factor eEF1A. May also inhibit nuclear import by competing with nuclear import substrates for binding to a subset of nuclear transport receptors. Has additionally been proposed to act as a redox sensor involved in cellular oxidative stress surveillance. May bind NADPH. This chain is Protein HTATIP2, found in Rattus norvegicus (Rat).